The primary structure comprises 373 residues: Ferroptosis suppressor protein 1 (373 aa).

Residue Gly2 is the site of N-myristoyl glycine attachment. A helical transmembrane segment spans residues Val7–Ala27. Residues Gly18–Gly22, Arg54, and Val82 contribute to the 6-hydroxy-FAD site. Lys168 is modified (N6-acetyllysine). Residue Asp285 coordinates 6-hydroxy-FAD.

Belongs to the FAD-dependent oxidoreductase family. As to quaternary structure, interacts with importin subunits KPNA2 and IPO5; this interaction likely mediates the translocation into the nucleus upon oxidative stress. It depends on 6-hydroxy-FAD as a cofactor. In terms of processing, N-myristoylation at Gly-2 mediates the recruitment to lipid droplets and plasma membrane. Post-translationally, acetylation at Lys-168 prevents AIFM2 ubiquitination and degradation, thereby inhibiting ferroptosis. KAT2B mediates acetylation at Lys-168, while HDAC3 removes it. Ubiquitinated. AIFM2 undergoes 'Lys-29'-ubiquitination and proteasomal degradation, which is inhibited by acetylation at Lys-168. As to expression, detected in most normal tissues as two transcripts of 1.8 and 4.0 kb in length, respectively. Highly expressed in liver, testis, and kidney, and expressed at lower levels in pancreas, spleen, brain and lung. Expressed in heart (at protein level).

The protein resides in the lipid droplet. Its subcellular location is the cell membrane. The protein localises to the cytoplasm. It localises to the mitochondrion membrane. It is found in the nucleus. The enzyme catalyses ubiquinone-10 + NADH + H(+) = ubiquinol-10 + NAD(+). It catalyses the reaction phylloquinone + NADH + H(+) = phylloquinol + NAD(+). It carries out the reaction menaquinone-4 + NADH + H(+) = menaquinol-4 + NAD(+). The catalysed reaction is menadione + NADH + H(+) = menadiol + NAD(+). Its activity is regulated as follows. The modification by 4-hydroxy-2-nonenal (HNE) adduction in mitochondria results in loss of the oxidoreductase activity and activation of a novel function in mitochondrial oxidative stress signaling. In terms of biological role, a NAD(P)H-dependent oxidoreductase that acts as a key inhibitor of ferroptosis. At the plasma membrane, catalyzes reduction of coenzyme Q/ubiquinone-10 to ubiquinol-10, a lipophilic radical-trapping antioxidant that prevents lipid oxidative damage and consequently ferroptosis. Acts in parallel to GPX4 to suppress phospholipid peroxidation and ferroptosis. This anti-ferroptotic function is independent of cellular glutathione levels. Also acts as a potent radical-trapping antioxidant by mediating warfarin-resistant vitamin K reduction in the canonical vitamin K cycle: catalyzes NAD(P)H-dependent reduction of vitamin K (phylloquinone, menaquinone-4 and menadione) to hydroquinone forms. Hydroquinones act as potent radical-trapping antioxidants inhibitor of phospholipid peroxidation and ferroptosis. May play a role in mitochondrial stress signaling. Upon oxidative stress, associates with the lipid peroxidation end product 4-hydroxy-2-nonenal (HNE) forming a lipid adduct devoid of oxidoreductase activity, which then translocates from mitochondria into the nucleus triggering DNA damage and cell death. The sequence is that of Ferroptosis suppressor protein 1 from Mus musculus (Mouse).